The following is a 163-amino-acid chain: Cyclic pyranopterin monophosphate synthase (163 aa).

Residues 75–77 (MCH) and 113–114 (ME) contribute to the substrate site. Aspartate 128 is an active-site residue.

It belongs to the MoaC family. In terms of assembly, homohexamer; trimer of dimers.

The catalysed reaction is (8S)-3',8-cyclo-7,8-dihydroguanosine 5'-triphosphate = cyclic pyranopterin phosphate + diphosphate. It functions in the pathway cofactor biosynthesis; molybdopterin biosynthesis. Its function is as follows. Catalyzes the conversion of (8S)-3',8-cyclo-7,8-dihydroguanosine 5'-triphosphate to cyclic pyranopterin monophosphate (cPMP). The sequence is that of Cyclic pyranopterin monophosphate synthase from Desulforapulum autotrophicum (strain ATCC 43914 / DSM 3382 / VKM B-1955 / HRM2) (Desulfobacterium autotrophicum).